The sequence spans 509 residues: Aspartic proteinase oryzasin-1 (509 aa).

The N-terminal stretch at 1–24 (MGTRSVALVLLAAVLLQALLPASA) is a signal peptide. The propeptide at 25 to 67 (AEGLVRIALKKRPIDENSRVAARLSGEEGARRLGLRGANSLGG) is activation peptide. The region spanning 85–506 (YFGEIGVGTP…DYGKMRVGFA (422 aa)) is the Peptidase A1 domain. D103 is a catalytic residue. An intrachain disulfide couples C116 to C122. N252 is a glycosylation site (N-linked (GlcNAc...) asparagine). Cysteines 281 and 285 form a disulfide. Residue D290 is part of the active site. In terms of domain architecture, Saposin B-type spans 315 to 420 (VVSQECKTVV…NQLCDKLPSP (106 aa)). 4 disulfide bridges follow: C320/C414, C345/C386, C351/C383, and C428/C465. Residue N400 is glycosylated (N-linked (GlcNAc...) asparagine).

The protein belongs to the peptidase A1 family.

The protein resides in the vacuole. In terms of biological role, involved in the breakdown of propeptides of storage proteins in protein-storage vacuoles. The sequence is that of Aspartic proteinase oryzasin-1 from Oryza sativa subsp. japonica (Rice).